The primary structure comprises 765 residues: Glycine--tRNA ligase (765 aa).

Residues 1 to 87 constitute a mitochondrion transit peptide; it reads MSLQLLKALP…LRSAAAEFIM (87 aa). The tract at residues 41 to 73 is disordered; sequence TTTKPTPSAPPPPPPTQPQQPAATTSWGTKKQN. A compositionally biased stretch (pro residues) spans 47-58; the sequence is PSAPPPPPPTQP. The 57-residue stretch at 95-151 folds into the WHEP-TRS domain; that stretch reads QLAPLRERVQEQGNLVRDLKAKGAPEIDVKKAVAELKARKKLLEDKELALTPSVVSF. Glycine is bound at residue E331. ATP is bound by residues 363 to 365 and 374 to 375; these read RNE and RV. E382 lines the glycine pocket. 489–490 is an ATP binding site; it reads EC. 609–611 is a glycine binding site; the sequence is EPS. R616 serves as a coordination point for ATP.

The protein belongs to the class-II aminoacyl-tRNA synthetase family. In terms of assembly, homodimer.

The protein resides in the mitochondrion. It localises to the cytoplasm. It is found in the cell projection. The protein localises to the axon. It carries out the reaction 2 ATP + H(+) = P(1),P(4)-bis(5'-adenosyl) tetraphosphate + diphosphate. It catalyses the reaction tRNA(Gly) + glycine + ATP = glycyl-tRNA(Gly) + AMP + diphosphate. Its function is as follows. Catalyzes the ATP-dependent ligation of glycine to the 3'-end of its cognate tRNA, via the formation of an aminoacyl-adenylate intermediate (Gly-AMP). Also produces diadenosine tetraphosphate (Ap4A), a universal pleiotropic signaling molecule needed for cell regulation pathways, by direct condensation of 2 ATPs. Thereby, may play a special role in Ap4A homeostasis. Required for terminal arborization of both dendrites and axons during development. The protein is Glycine--tRNA ligase of Drosophila melanogaster (Fruit fly).